We begin with the raw amino-acid sequence, 177 residues long: Large ribosomal subunit protein uL6 (177 aa).

This sequence belongs to the universal ribosomal protein uL6 family. As to quaternary structure, part of the 50S ribosomal subunit.

This protein binds to the 23S rRNA, and is important in its secondary structure. It is located near the subunit interface in the base of the L7/L12 stalk, and near the tRNA binding site of the peptidyltransferase center. This Neisseria meningitidis serogroup C (strain 053442) protein is Large ribosomal subunit protein uL6.